The sequence spans 128 residues: Large ribosomal subunit protein bL12 (128 aa).

This sequence belongs to the bacterial ribosomal protein bL12 family. As to quaternary structure, homodimer. Part of the ribosomal stalk of the 50S ribosomal subunit. Forms a multimeric L10(L12)X complex, where L10 forms an elongated spine to which 2 to 4 L12 dimers bind in a sequential fashion. Binds GTP-bound translation factors.

Forms part of the ribosomal stalk which helps the ribosome interact with GTP-bound translation factors. Is thus essential for accurate translation. The protein is Large ribosomal subunit protein bL12 of Aquifex aeolicus (strain VF5).